The following is a 139-amino-acid chain: Small ribosomal subunit protein uS11 (139 aa).

A disordered region spans residues Met1–Ile33. A compositionally biased stretch (basic residues) spans Lys14–Lys23.

This sequence belongs to the universal ribosomal protein uS11 family. In terms of assembly, part of the 30S ribosomal subunit. Interacts with proteins S7 and S18. Binds to IF-3.

Functionally, located on the platform of the 30S subunit, it bridges several disparate RNA helices of the 16S rRNA. Forms part of the Shine-Dalgarno cleft in the 70S ribosome. The chain is Small ribosomal subunit protein uS11 from Mycobacterium bovis (strain ATCC BAA-935 / AF2122/97).